The following is a 238-amino-acid chain: 15,16-dihydrobiliverdin:ferredoxin oxidoreductase (238 aa).

The protein belongs to the HY2 family.

It carries out the reaction 15,16-dihydrobiliverdin + oxidized 2[4Fe-4S]-[ferredoxin] = biliverdin IXalpha + reduced 2[4Fe-4S]-[ferredoxin] + 2 H(+). Catalyzes the two-electron reduction of biliverdin IX-alpha at the C15 methine bridge. The protein is 15,16-dihydrobiliverdin:ferredoxin oxidoreductase of Prochlorococcus marinus (strain NATL2A).